Here is a 1205-residue protein sequence, read N- to C-terminus: Centrosome and spindle pole associated protein 1 (1205 aa).

2 coiled-coil regions span residues 12 to 34 (QKAK…EMKG) and 87 to 108 (KLKE…TQAK). The tract at residues 16-37 (LAKDKAELESDPPYMEMKGKAS) is disordered. The segment covering 158–173 (STEKVRQVEKNIEPKS) has biased composition (basic and acidic residues). Disordered regions lie at residues 158–187 (STEK…KSDL), 222–277 (SRRP…PGVS), and 380–467 (QQKK…GSTL). Over residues 176–187 (NKNPISQGKSDL) the composition is skewed to polar residues. Basic and acidic residues-rich tracts occupy residues 222–233 (SRRPLKQTKEEV) and 257–275 (ANGE…RDPG). The stretch at 357-391 (EDRELTKRRKEKYRQELLEQIAEQQKKKRREKDLA) forms a coiled coil. Composition is skewed to basic and acidic residues over residues 401–410 (DPEKSPDRLK) and 417–428 (RHFEEMPPERPR). Ser405 carries the post-translational modification Phosphoserine. The segment covering 433–447 (TPPPPFSAPSSPSVP) has biased composition (pro residues). Positions 574–618 (STQSLQSYQEALQEQIREREARRKKERLEKEEYEAKLEAEMRIYN) form a coiled coil. The disordered stretch occupies residues 677–704 (AENLEDSANKNSGPLQTQSSPFARGNTF). The span at 685 to 697 (NKNSGPLQTQSSP) shows a compositional bias: polar residues. Residues 724 to 813 (RFQIEEKRQR…EKHNLQLQHY (90 aa)) adopt a coiled-coil conformation. 2 positions are modified to phosphoserine: Ser850 and Ser869. The segment at 862-881 (SSMSRAQSPPVPARKNQLRA) is disordered. A coiled-coil region spans residues 874-911 (ARKNQLRAEEEKKNVIMELSEMRKQLRSEERRLQGRLL). Phosphoserine is present on Ser915. The stretch at 993-1014 (QQQALLREQQKRLNRIKMRRDA) forms a coiled coil. Disordered stretches follow at residues 1086 to 1105 (GLDF…SLKS), 1124 to 1169 (RLTE…RPGT), and 1182 to 1205 (NEEQ…AAHA). A compositionally biased stretch (basic and acidic residues) spans 1124 to 1134 (RLTEQQKKPTN). Residues 1135-1145 (TDDEGSLVDPD) are compositionally biased toward acidic residues. Residues 1146 to 1156 (DIMRHLSDDGR) are compositionally biased toward basic and acidic residues.

In terms of assembly, interacts with PLEKHG6. Interacts with ARMC9, TOGARAM1, CCDC66, CEP104 and CEP290. Phosphorylated. Phosphorylation increases in colcemide-treated cells.

Its subcellular location is the cytoplasm. It is found in the cytoskeleton. The protein resides in the microtubule organizing center. It localises to the centrosome. The protein localises to the spindle. Its subcellular location is the spindle pole. It is found in the cell projection. The protein resides in the cilium. Its function is as follows. May play a role in cell-cycle-dependent microtubule organization. In Mus musculus (Mouse), this protein is Centrosome and spindle pole associated protein 1 (Cspp1).